A 119-amino-acid chain; its full sequence is Protein TusC (119 aa).

It belongs to the DsrF/TusC family. In terms of assembly, heterohexamer, formed by a dimer of trimers. The hexameric TusBCD complex contains 2 copies each of TusB, TusC and TusD. The TusBCD complex interacts with TusE.

The protein resides in the cytoplasm. Part of a sulfur-relay system required for 2-thiolation of 5-methylaminomethyl-2-thiouridine (mnm(5)s(2)U) at tRNA wobble positions. In Escherichia fergusonii (strain ATCC 35469 / DSM 13698 / CCUG 18766 / IAM 14443 / JCM 21226 / LMG 7866 / NBRC 102419 / NCTC 12128 / CDC 0568-73), this protein is Protein TusC.